A 174-amino-acid polypeptide reads, in one-letter code: MTLILGIDPGSRITGYGVVRDTGRGCEYVASGCIRTGDGPLAERLQIVFRGVSEVIRTHGPVTMGIEQVFMARNADSALKLGQARGAAIVAAVEAGLEISEYTATQVKQAVVGTGAADKQQVQMMVMHLLKLVQKPQIDASDALGIALCHAHHRQSLIPHGLASAKRRGGRLRL.

Residues D8, E67, and D139 contribute to the active site. Residues D8, E67, and D139 each coordinate Mg(2+).

It belongs to the RuvC family. Homodimer which binds Holliday junction (HJ) DNA. The HJ becomes 2-fold symmetrical on binding to RuvC with unstacked arms; it has a different conformation from HJ DNA in complex with RuvA. In the full resolvosome a probable DNA-RuvA(4)-RuvB(12)-RuvC(2) complex forms which resolves the HJ. The cofactor is Mg(2+).

It localises to the cytoplasm. It carries out the reaction Endonucleolytic cleavage at a junction such as a reciprocal single-stranded crossover between two homologous DNA duplexes (Holliday junction).. In terms of biological role, the RuvA-RuvB-RuvC complex processes Holliday junction (HJ) DNA during genetic recombination and DNA repair. Endonuclease that resolves HJ intermediates. Cleaves cruciform DNA by making single-stranded nicks across the HJ at symmetrical positions within the homologous arms, yielding a 5'-phosphate and a 3'-hydroxyl group; requires a central core of homology in the junction. The consensus cleavage sequence is 5'-(A/T)TT(C/G)-3'. Cleavage occurs on the 3'-side of the TT dinucleotide at the point of strand exchange. HJ branch migration catalyzed by RuvA-RuvB allows RuvC to scan DNA until it finds its consensus sequence, where it cleaves and resolves the cruciform DNA. In Ectopseudomonas mendocina (strain ymp) (Pseudomonas mendocina), this protein is Crossover junction endodeoxyribonuclease RuvC.